The primary structure comprises 427 residues: Acetyl-CoA acetyltransferase, mitochondrial (427 aa).

Residues 1 to 33 (MAVLAALLRSGARSRSPLLRRLVQEIRYVERSY) constitute a mitochondrion transit peptide. Lys-66 bears the N6-acetyllysine; alternate mark. An N6-succinyllysine; alternate modification is found at Lys-66. At Lys-78 the chain carries N6-succinyllysine. Residue Cys-126 is the Acyl-thioester intermediate of the active site. 4 positions are modified to N6-acetyllysine; alternate: Lys-174, Lys-181, Lys-190, and Lys-202. N6-succinyllysine; alternate is present on residues Lys-174, Lys-181, Lys-190, and Lys-202. Tyr-219 is a CoA binding site. A K(+)-binding site is contributed by Tyr-219. An N6-acetyllysine; alternate mark is found at Lys-223 and Lys-230. N6-succinyllysine; alternate occurs at positions 223 and 230. Lys-243 is subject to N6-succinyllysine. N6-acetyllysine occurs at positions 251 and 257. Residues 258 to 260 (RVD) and Lys-263 contribute to the CoA site. The residue at position 263 (Lys-263) is an N6-acetyllysine; alternate. Lys-263 carries the post-translational modification N6-succinyllysine; alternate. Residues Lys-266 and Lys-268 each carry the N6-succinyllysine modification. At Lys-273 the chain carries N6-acetyllysine. Residues Ala-280, Ala-281, and Ala-283 each coordinate K(+). Residue Ser-284 participates in CoA binding. An N6-acetyllysine modification is found at Lys-338. Residue Val-381 coordinates K(+). Cys-413 serves as the catalytic Proton donor/acceptor.

This sequence belongs to the thiolase-like superfamily. Thiolase family. Homotetramer. Succinylation at Lys-268, adjacent to a coenzyme A binding site. Desuccinylated by SIRT5.

Its subcellular location is the mitochondrion. It carries out the reaction 2 acetyl-CoA = acetoacetyl-CoA + CoA. The catalysed reaction is propanoyl-CoA + acetyl-CoA = 2-methyl-3-oxobutanoyl-CoA + CoA. It functions in the pathway lipid metabolism; fatty acid beta-oxidation. Its activity is regulated as follows. Activated by potassium ions, but not sodium ions. Functionally, this is one of the enzymes that catalyzes the last step of the mitochondrial beta-oxidation pathway, an aerobic process breaking down fatty acids into acetyl-CoA. Using free coenzyme A/CoA, catalyzes the thiolytic cleavage of medium- to long-chain 3-oxoacyl-CoAs into acetyl-CoA and a fatty acyl-CoA shortened by two carbon atoms. The activity of the enzyme is reversible and it can also catalyze the condensation of two acetyl-CoA molecules into acetoacetyl-CoA. Thereby, it plays a major role in ketone body metabolism. The sequence is that of Acetyl-CoA acetyltransferase, mitochondrial (ACAT1) from Homo sapiens (Human).